We begin with the raw amino-acid sequence, 116 residues long: Putative pterin-4-alpha-carbinolamine dehydratase (116 aa).

Belongs to the pterin-4-alpha-carbinolamine dehydratase family.

It carries out the reaction (4aS,6R)-4a-hydroxy-L-erythro-5,6,7,8-tetrahydrobiopterin = (6R)-L-erythro-6,7-dihydrobiopterin + H2O. This is Putative pterin-4-alpha-carbinolamine dehydratase from Xylella fastidiosa (strain 9a5c).